A 218-amino-acid chain; its full sequence is Octanoyltransferase (218 aa).

The BPL/LPL catalytic domain maps to 32–218 (GDAPEAVWLL…LRTFSRSFPD (187 aa)). Residues 71–78 (RGGQYTYH), 151–153 (AIG), and 164–166 (GLS) each bind substrate. Cys182 (acyl-thioester intermediate) is an active-site residue.

This sequence belongs to the LipB family.

The protein localises to the cytoplasm. It carries out the reaction octanoyl-[ACP] + L-lysyl-[protein] = N(6)-octanoyl-L-lysyl-[protein] + holo-[ACP] + H(+). Its pathway is protein modification; protein lipoylation via endogenous pathway; protein N(6)-(lipoyl)lysine from octanoyl-[acyl-carrier-protein]: step 1/2. In terms of biological role, catalyzes the transfer of endogenously produced octanoic acid from octanoyl-acyl-carrier-protein onto the lipoyl domains of lipoate-dependent enzymes. Lipoyl-ACP can also act as a substrate although octanoyl-ACP is likely to be the physiological substrate. In Cereibacter sphaeroides (strain ATCC 17025 / ATH 2.4.3) (Rhodobacter sphaeroides), this protein is Octanoyltransferase.